Here is a 347-residue protein sequence, read N- to C-terminus: Haptoglobin (347 aa).

A signal peptide spans M1–A18. The region spanning D31–A88 is the Sushi domain. 4 cysteine pairs are disulfide-bonded: C52/C86, C90/C207, C250/C281, and C292/C322. Residues I103–N347 form the Peptidase S1 domain. Residues N125, N148, N152, and N182 are each glycosylated (N-linked (GlcNAc...) asparagine). The interaction with CD163 stretch occupies residues V259–T264.

Belongs to the peptidase S1 family. As to quaternary structure, tetramer of two alpha and two beta chains; disulfide-linked. The hemoglobin/haptoglobin complex is composed of a haptoglobin dimer bound to two hemoglobin alpha-beta dimers. Interacts with CD163. Interacts with ERGIC3.

The protein resides in the secreted. Its function is as follows. As a result of hemolysis, hemoglobin is found to accumulate in the kidney and is secreted in the urine. Haptoglobin captures, and combines with free plasma hemoglobin to allow hepatic recycling of heme iron and to prevent kidney damage. Haptoglobin also acts as an antioxidant, has antibacterial activity and plays a role in modulating many aspects of the acute phase response. Hemoglobin/haptoglobin complexes are rapidly cleared by the macrophage CD163 scavenger receptor expressed on the surface of liver Kupfer cells through an endocytic lysosomal degradation pathway. This Pongo abelii (Sumatran orangutan) protein is Haptoglobin (HP).